A 201-amino-acid chain; its full sequence is Holliday junction branch migration complex subunit RuvA (201 aa).

The interval 1 to 63 (MIAYLSGVVR…EDAQLLFGFP (63 aa)) is domain I. Positions 64 to 142 (DADHLKLFDL…EHLAAAASGA (79 aa)) are domain II. The interval 143–150 (AGGKRPAR) is flexible linker. The tract at residues 151-201 (VSSTAGHDAVDALLALGFREAQVRAAVAELLGADPEASADTLIRKALGRLR) is domain III.

It belongs to the RuvA family. As to quaternary structure, homotetramer. Forms an RuvA(8)-RuvB(12)-Holliday junction (HJ) complex. HJ DNA is sandwiched between 2 RuvA tetramers; dsDNA enters through RuvA and exits via RuvB. An RuvB hexamer assembles on each DNA strand where it exits the tetramer. Each RuvB hexamer is contacted by two RuvA subunits (via domain III) on 2 adjacent RuvB subunits; this complex drives branch migration. In the full resolvosome a probable DNA-RuvA(4)-RuvB(12)-RuvC(2) complex forms which resolves the HJ.

Its subcellular location is the cytoplasm. In terms of biological role, the RuvA-RuvB-RuvC complex processes Holliday junction (HJ) DNA during genetic recombination and DNA repair, while the RuvA-RuvB complex plays an important role in the rescue of blocked DNA replication forks via replication fork reversal (RFR). RuvA specifically binds to HJ cruciform DNA, conferring on it an open structure. The RuvB hexamer acts as an ATP-dependent pump, pulling dsDNA into and through the RuvAB complex. HJ branch migration allows RuvC to scan DNA until it finds its consensus sequence, where it cleaves and resolves the cruciform DNA. This Deinococcus radiodurans (strain ATCC 13939 / DSM 20539 / JCM 16871 / CCUG 27074 / LMG 4051 / NBRC 15346 / NCIMB 9279 / VKM B-1422 / R1) protein is Holliday junction branch migration complex subunit RuvA.